Consider the following 134-residue polypeptide: Small ribosomal subunit protein uS12 (134 aa).

Residues 1-30 (MPTINQLVKHGREKVKEKSKSPALQGHPQK) form a disordered region. The residue at position 89 (Asp-89) is a 3-methylthioaspartic acid. The disordered stretch occupies residues 106–134 (GVENRRQSRSKYGAKRPKAGAAAGAKGKK). Positions 112 to 123 (QSRSKYGAKRPK) are enriched in basic residues. The segment covering 124-134 (AGAAAGAKGKK) has biased composition (low complexity).

This sequence belongs to the universal ribosomal protein uS12 family. As to quaternary structure, part of the 30S ribosomal subunit. Contacts proteins S8 and S17. May interact with IF1 in the 30S initiation complex.

Functionally, with S4 and S5 plays an important role in translational accuracy. Its function is as follows. Interacts with and stabilizes bases of the 16S rRNA that are involved in tRNA selection in the A site and with the mRNA backbone. Located at the interface of the 30S and 50S subunits, it traverses the body of the 30S subunit contacting proteins on the other side and probably holding the rRNA structure together. The combined cluster of proteins S8, S12 and S17 appears to hold together the shoulder and platform of the 30S subunit. The polypeptide is Small ribosomal subunit protein uS12 (Fervidobacterium nodosum (strain ATCC 35602 / DSM 5306 / Rt17-B1)).